The following is a 388-amino-acid chain: Chaperone protein DnaJ (388 aa).

A J domain is found at 6-71; it reads DYYEILGVPR…EKRKLYDQFG (66 aa). The CR-type zinc-finger motif lies at 147–229; that stretch reads GCEKEIPIYR…CGGTGNVRRQ (83 aa). Residues C160, C163, C177, C180, C203, C206, C217, and C220 each contribute to the Zn(2+) site. 4 CXXCXGXG motif repeats span residues 160–167, 177–184, 203–210, and 217–224; these read CSVCGGSG, CQKCGGTG, CDACGGTG, and CRECGGTG.

Belongs to the DnaJ family. Homodimer. It depends on Zn(2+) as a cofactor.

Its subcellular location is the cytoplasm. In terms of biological role, participates actively in the response to hyperosmotic and heat shock by preventing the aggregation of stress-denatured proteins and by disaggregating proteins, also in an autonomous, DnaK-independent fashion. Unfolded proteins bind initially to DnaJ; upon interaction with the DnaJ-bound protein, DnaK hydrolyzes its bound ATP, resulting in the formation of a stable complex. GrpE releases ADP from DnaK; ATP binding to DnaK triggers the release of the substrate protein, thus completing the reaction cycle. Several rounds of ATP-dependent interactions between DnaJ, DnaK and GrpE are required for fully efficient folding. Also involved, together with DnaK and GrpE, in the DNA replication of plasmids through activation of initiation proteins. In Caldicellulosiruptor bescii (strain ATCC BAA-1888 / DSM 6725 / KCTC 15123 / Z-1320) (Anaerocellum thermophilum), this protein is Chaperone protein DnaJ.